The sequence spans 114 residues: MSDDVALPLQFTDAAANKVKSLIADEDNPNLKLRVYITGGGCSGFQYGFTFDDQINDGDMTIEKQGVSLVVDPMSLQYLVGGAVDYTEGLEGSRFVVNNPNATSTCGCGSSFSI.

Positions 42, 106, and 108 each coordinate iron-sulfur cluster.

This sequence belongs to the HesB/IscA family. As to quaternary structure, homodimer. Requires iron-sulfur cluster as cofactor.

Functionally, required for insertion of 4Fe-4S clusters for at least IspG. The chain is Iron-sulfur cluster insertion protein ErpA from Cronobacter sakazakii (strain ATCC BAA-894) (Enterobacter sakazakii).